The following is a 141-amino-acid chain: Lutropin subunit beta (141 aa).

An N-terminal signal peptide occupies residues 1–18; that stretch reads MGTLQGLLLWLLLGTGGA. 6 cysteine pairs are disulfide-bonded: cysteine 29–cysteine 77, cysteine 43–cysteine 92, cysteine 46–cysteine 130, cysteine 54–cysteine 108, cysteine 58–cysteine 110, and cysteine 113–cysteine 120. Asparagine 33 is a glycosylation site (N-linked (GlcNAc...) asparagine).

Belongs to the glycoprotein hormones subunit beta family. As to quaternary structure, heterodimer of a common alpha chain and a unique beta chain which confers biological specificity to thyrotropin, lutropin, follitropin and gonadotropin.

The protein resides in the secreted. In terms of biological role, promotes spermatogenesis and ovulation by stimulating the testes and ovaries to synthesize steroids. This Oryctolagus cuniculus (Rabbit) protein is Lutropin subunit beta (LHB).